Consider the following 209-residue polypeptide: Uracil phosphoribosyltransferase (209 aa).

Residues R79, R104, and 131–139 (DPMLATGGS) each bind 5-phospho-alpha-D-ribose 1-diphosphate. Residues I194 and 199–201 (GDA) contribute to the uracil site. D200 provides a ligand contact to 5-phospho-alpha-D-ribose 1-diphosphate.

It belongs to the UPRTase family. Mg(2+) serves as cofactor.

It catalyses the reaction UMP + diphosphate = 5-phospho-alpha-D-ribose 1-diphosphate + uracil. It functions in the pathway pyrimidine metabolism; UMP biosynthesis via salvage pathway; UMP from uracil: step 1/1. With respect to regulation, allosterically activated by GTP. Functionally, catalyzes the conversion of uracil and 5-phospho-alpha-D-ribose 1-diphosphate (PRPP) to UMP and diphosphate. This Alkaliphilus metalliredigens (strain QYMF) protein is Uracil phosphoribosyltransferase.